The chain runs to 480 residues: UDP-N-acetylmuramoylalanine--D-glutamate ligase (480 aa).

ATP is bound at residue Gly-127–Thr-133.

It belongs to the MurCDEF family.

Its subcellular location is the cytoplasm. It carries out the reaction UDP-N-acetyl-alpha-D-muramoyl-L-alanine + D-glutamate + ATP = UDP-N-acetyl-alpha-D-muramoyl-L-alanyl-D-glutamate + ADP + phosphate + H(+). It participates in cell wall biogenesis; peptidoglycan biosynthesis. Its function is as follows. Cell wall formation. Catalyzes the addition of glutamate to the nucleotide precursor UDP-N-acetylmuramoyl-L-alanine (UMA). This chain is UDP-N-acetylmuramoylalanine--D-glutamate ligase, found in Tropheryma whipplei (strain Twist) (Whipple's bacillus).